The chain runs to 835 residues: Pre-mRNA-processing protein 40C (835 aa).

Residues 1 to 20 are compositionally biased toward polar residues; sequence MEGENTTDPPYTTAASSGQS. The segment at 1–22 is disordered; the sequence is MEGENTTDPPYTTAASSGQSIF. WW domains follow at residues 243-276 and 295-328; these read GNRL…KPPG and SLPG…IPAE. Positions 397-459 are disordered; sequence SGMPVSSTIT…DSGPSKEECS (63 aa). Residues 400–428 show a composition bias toward polar residues; that stretch reads PVSSTITSEANSGKTTEVTPSGESGNSTG. 3 FF domains span residues 455-509, 519-577, and 590-643; these read KEEC…YVKT, RAAH…RVLS, and RAAA…YIAE. Disordered stretches follow at residues 649–677 and 714–738; these read RGDD…RKER and TESK…PADK. 2 consecutive FF domains span residues 691-748 and 750-815; these read RKEA…HVKS and YERC…YVED.

This sequence belongs to the PRPF40 family. In terms of assembly, interacts (via the WW domains) with the phosphorylated C-terminal domain of NRPB1 (via CTD domain). In terms of tissue distribution, expressed in roots, shoots, rosette leaves, cauline leaves, stems and flowers.

It is found in the nucleus. Functionally, binds the phosphorylated C-terminal domain (CTD) of the largest subunit of RNA polymerase II and functions as a scaffold for RNA processing machineries. May be involved in pre-mRNA splicing. The sequence is that of Pre-mRNA-processing protein 40C from Arabidopsis thaliana (Mouse-ear cress).